The following is a 1136-amino-acid chain: DNA-directed RNA polymerase I subunit RPA2 (1136 aa).

The segment at 1–24 is disordered; it reads MDPGSRWRNLPSGPSLKHLTDPSY. Arg-180 is an RNA binding site. Residues 194 to 208 form a loop B region; that stretch reads VRPKWKTRGPGYTHY. Residues 236–247 are loop A; sequence LNFIYRKELFFL. Position 367 (Asp-367) interacts with RNA. Fork loop regions lie at residues 439–453 and 474–489; these read LRSK…DSGL and RGAD…VRRL. Lys-890 contacts RNA. Positions 1020 and 1036 each coordinate DNA. Residue Ser-1051 is modified to Phosphoserine. Residues Cys-1071, Cys-1074, Cys-1099, and Cys-1102 each coordinate Zn(2+). Residues 1071-1102 form a C4-type zinc finger; sequence CVKCGSLLSPLLEKPPPSWSAMRNRKYNCTLC.

It belongs to the RNA polymerase beta chain family. As to quaternary structure, component of the RNA polymerase I (Pol I) complex consisting of 13 subunits: a ten-subunit catalytic core composed of POLR1A/RPA1, POLR1B/RPA2, POLR1C/RPAC1, POLR1D/RPAC2, POLR1H/RPA12, POLR2E/RPABC1, POLR2F/RPABC2, POLR2H/RPABC3, POLR2K/RPABC4 and POLR2L/RPABC5; a mobile stalk subunit POLR1F/RPA43 protruding from the core and additional subunits homologous to general transcription factors POLR1E/RPA49 and POLR1G/RPA34. Part of Pol I pre-initiation complex (PIC), in which Pol I core assembles with RRN3 and promoter-bound UTBF and SL1/TIF-IB complex.

It localises to the nucleus. The protein localises to the nucleolus. Its subcellular location is the chromosome. It catalyses the reaction RNA(n) + a ribonucleoside 5'-triphosphate = RNA(n+1) + diphosphate. Catalytic core component of RNA polymerase I (Pol I), a DNA-dependent RNA polymerase which synthesizes ribosomal RNA precursors using the four ribonucleoside triphosphates as substrates. Transcribes 47S pre-rRNAs from multicopy rRNA gene clusters, giving rise to 5.8S, 18S and 28S ribosomal RNAs. Pol I-mediated transcription cycle proceeds through transcription initiation, transcription elongation and transcription termination stages. During transcription initiation, Pol I pre-initiation complex (PIC) is recruited by the selectivity factor 1 (SL1/TIF-IB) complex bound to the core promoter that precedes an rDNA repeat unit. The PIC assembly bends the promoter favoring the formation of the transcription bubble and promoter escape. Once the polymerase has escaped from the promoter it enters the elongation phase during which RNA is actively polymerized, based on complementarity with the template DNA strand. Highly processive, assembles in structures referred to as 'Miller trees' where many elongating Pol I complexes queue and transcribe the same rDNA coding regions. At terminator sequences downstream of the rDNA gene, PTRF interacts with Pol I and halts Pol I transcription leading to the release of the RNA transcript and polymerase from the DNA. Forms Pol I active center together with the largest subunit POLR1A/RPA1. Appends one nucleotide at a time to the 3' end of the nascent RNA, with POLR1A/RPA1 contributing a Mg(2+)-coordinating DxDGD motif, and POLR1B/RPA2 providing lysine residues believed to facilitate Watson-Crick base pairing between the incoming nucleotide and the template base. Typically, Mg(2+) ions direct a 5' nucleoside triphosphate to form a phosphodiester bond with the 3' hydroxyl of the preceding nucleotide of the nascent RNA, with the elimination of pyrophosphate. Has proofreading activity: Pauses and backtracks to allow the cleavage of a missincorporated nucleotide via POLR1H/RPA12. High Pol I processivity is associated with decreased transcription fidelity. This Pongo abelii (Sumatran orangutan) protein is DNA-directed RNA polymerase I subunit RPA2 (POLR1B).